The following is a 316-amino-acid chain: Glycine--tRNA ligase alpha subunit (316 aa).

It belongs to the class-II aminoacyl-tRNA synthetase family. As to quaternary structure, tetramer of two alpha and two beta subunits.

It localises to the cytoplasm. It carries out the reaction tRNA(Gly) + glycine + ATP = glycyl-tRNA(Gly) + AMP + diphosphate. This chain is Glycine--tRNA ligase alpha subunit, found in Paracoccus denitrificans (strain Pd 1222).